A 188-amino-acid polypeptide reads, in one-letter code: Ribosomal RNA small subunit methyltransferase G (188 aa).

Residues glycine 69, phenylalanine 74, 119-120 (VQ), and arginine 134 contribute to the S-adenosyl-L-methionine site.

It belongs to the methyltransferase superfamily. RNA methyltransferase RsmG family.

It localises to the cytoplasm. It carries out the reaction guanosine(527) in 16S rRNA + S-adenosyl-L-methionine = N(7)-methylguanosine(527) in 16S rRNA + S-adenosyl-L-homocysteine. Its function is as follows. Specifically methylates the N7 position of guanine in position 527 of 16S rRNA. The polypeptide is Ribosomal RNA small subunit methyltransferase G (Campylobacter jejuni (strain RM1221)).